Consider the following 1573-residue polypeptide: Mediator of RNA polymerase II transcription subunit 1 (1573 aa).

An LXXLL motif 1 motif is present at residues 588–592 (LTSLL). Disordered stretches follow at residues 595–691 (TSNS…EDDF), 774–883 (SKLP…FKDF), and 928–1564 (LGGP…GDDD). Positions 606 to 617 (PTPPQHTPPPAS) are enriched in pro residues. Positions 629–633 (LMNLL) match the LXXLL motif 2 motif. Polar residues predominate over residues 651–668 (ERQNSSGSPRTELGSSAS). The span at 678–691 (TGTEKMKNQTEDDF) shows a compositional bias: basic and acidic residues. Composition is skewed to polar residues over residues 791–804 (RDSS…STLF), 835–864 (GSPN…QSGF), and 934–944 (QETQSRSQSPL). Basic and acidic residues predominate over residues 949–961 (LGKDRPQKQKVKE). Positions 963-973 (GNGGGAGGGLS) are enriched in gly residues. Composition is skewed to low complexity over residues 1025-1038 (PTST…GTSG), 1053-1085 (KITI…SSSS), 1092-1116 (SSLS…MKIG), 1124-1143 (SGQS…SMGK), and 1155-1164 (SSNVNNSSGS). Over residues 1176 to 1193 (MNPSLSKPNISPSHSRPS) the composition is skewed to polar residues. A compositionally biased stretch (low complexity) spans 1226–1277 (LSGSGSNSTTKSSSGLVSSGSLTQKPNSSSSSSSSSSSSSSSSSSSSSSFSS). Polar residues predominate over residues 1278–1290 (GVSQNLHSSSKGK). The segment covering 1350–1362 (PTKREKGEKDKSK) has biased composition (basic and acidic residues). Polar residues-rich tracts occupy residues 1420-1435 (SQMQ…SGST) and 1443-1457 (PSHN…QALD). Low complexity predominate over residues 1461–1471 (ESGSSSIAEKS). The segment covering 1496 to 1505 (KHKKHKKEKK) has biased composition (basic residues). A compositionally biased stretch (basic and acidic residues) spans 1506-1518 (RLKDKDRDREKKK).

Belongs to the Mediator complex subunit 1 family. In terms of assembly, component of the Mediator complex.

It is found in the nucleus. In terms of biological role, component of the Mediator complex, a coactivator involved in the regulated transcription of nearly all RNA polymerase II-dependent genes. Mediator functions as a bridge to convey information from gene-specific regulatory proteins to the basal RNA polymerase II transcription machinery. Mediator is recruited to promoters by direct interactions with regulatory proteins and serves as a scaffold for the assembly of a functional preinitiation complex with RNA polymerase II and the general transcription factors. In Xenopus tropicalis (Western clawed frog), this protein is Mediator of RNA polymerase II transcription subunit 1 (med1).